The sequence spans 155 residues: Ribosome maturation factor RimP (155 aa).

It belongs to the RimP family.

Its subcellular location is the cytoplasm. Required for maturation of 30S ribosomal subunits. The protein is Ribosome maturation factor RimP of Synechococcus sp. (strain CC9605).